We begin with the raw amino-acid sequence, 114 residues long: Pancreatic progenitor cell differentiation and proliferation factor (114 aa).

Residue Ser-9 is modified to Phosphoserine. 2 disordered regions span residues 22 to 47 and 75 to 114; these read GSTS…PGLP and AEHS…GPPS. Over residues 23-33 the composition is skewed to low complexity; that stretch reads STSSNSSCSST. The segment covering 102 to 114 has biased composition (polar residues); the sequence is GGQSSTASAGPPS.

Belongs to the PPDPF family.

Probable regulator of exocrine pancreas development. The sequence is that of Pancreatic progenitor cell differentiation and proliferation factor (PPDPF) from Homo sapiens (Human).